We begin with the raw amino-acid sequence, 422 residues long: Tryptophan synthase beta chain (422 aa).

At Lys-111 the chain carries N6-(pyridoxal phosphate)lysine.

Belongs to the TrpB family. As to quaternary structure, tetramer of two alpha and two beta chains. Requires pyridoxal 5'-phosphate as cofactor.

It catalyses the reaction (1S,2R)-1-C-(indol-3-yl)glycerol 3-phosphate + L-serine = D-glyceraldehyde 3-phosphate + L-tryptophan + H2O. It participates in amino-acid biosynthesis; L-tryptophan biosynthesis; L-tryptophan from chorismate: step 5/5. The beta subunit is responsible for the synthesis of L-tryptophan from indole and L-serine. The polypeptide is Tryptophan synthase beta chain (Pseudothermotoga lettingae (strain ATCC BAA-301 / DSM 14385 / NBRC 107922 / TMO) (Thermotoga lettingae)).